The chain runs to 326 residues: Ribosomal large subunit pseudouridine synthase D (326 aa).

Aspartate 144 is a catalytic residue.

Belongs to the pseudouridine synthase RluA family.

The protein localises to the cytoplasm. The enzyme catalyses uridine(1911/1915/1917) in 23S rRNA = pseudouridine(1911/1915/1917) in 23S rRNA. In terms of biological role, responsible for synthesis of pseudouridine from uracil at positions 1911, 1915 and 1917 in 23S ribosomal RNA. The chain is Ribosomal large subunit pseudouridine synthase D from Borreliella burgdorferi (strain ATCC 35210 / DSM 4680 / CIP 102532 / B31) (Borrelia burgdorferi).